A 339-amino-acid chain; its full sequence is tRNA N6-adenosine threonylcarbamoyltransferase (339 aa).

Fe cation is bound by residues H114 and H118. Residues 137–141 (VVSGG), D170, G183, D187, and N277 contribute to the substrate site. Residue D305 coordinates Fe cation.

It belongs to the KAE1 / TsaD family. Requires Fe(2+) as cofactor.

The protein localises to the cytoplasm. The catalysed reaction is L-threonylcarbamoyladenylate + adenosine(37) in tRNA = N(6)-L-threonylcarbamoyladenosine(37) in tRNA + AMP + H(+). Functionally, required for the formation of a threonylcarbamoyl group on adenosine at position 37 (t(6)A37) in tRNAs that read codons beginning with adenine. Is involved in the transfer of the threonylcarbamoyl moiety of threonylcarbamoyl-AMP (TC-AMP) to the N6 group of A37, together with TsaE and TsaB. TsaD likely plays a direct catalytic role in this reaction. The protein is tRNA N6-adenosine threonylcarbamoyltransferase of Clostridium beijerinckii (strain ATCC 51743 / NCIMB 8052) (Clostridium acetobutylicum).